A 326-amino-acid chain; its full sequence is Putative ribose-phosphate pyrophosphokinase 2 (326 aa).

ATP-binding positions include 43-45 and 102-103; these read DGE and RQ. A Mg(2+)-binding site is contributed by His136. D-ribose 5-phosphate contacts are provided by residues Asp225 and 229–233; that span reads NTGKT.

As to quaternary structure, homohexamer. Mg(2+) is required as a cofactor.

It localises to the cytoplasm. It carries out the reaction D-ribose 5-phosphate + ATP = 5-phospho-alpha-D-ribose 1-diphosphate + AMP + H(+). It participates in metabolic intermediate biosynthesis; 5-phospho-alpha-D-ribose 1-diphosphate biosynthesis; 5-phospho-alpha-D-ribose 1-diphosphate from D-ribose 5-phosphate (route I): step 1/1. Its function is as follows. Involved in the biosynthesis of the central metabolite phospho-alpha-D-ribosyl-1-pyrophosphate (PRPP) via the transfer of pyrophosphoryl group from ATP to 1-hydroxyl of ribose-5-phosphate (Rib-5-P). The polypeptide is Putative ribose-phosphate pyrophosphokinase 2 (Streptococcus pyogenes serotype M6 (strain ATCC BAA-946 / MGAS10394)).